A 505-amino-acid chain; its full sequence is Beta-glucosidase 3 (505 aa).

Positions 1-22 (MAAAAAFFCALLFISVQHGVLG) are cleaved as a signal peptide. A beta-D-glucoside contacts are provided by glutamine 43 and histidine 143. The active-site Proton donor is glutamate 189. Cysteine 208 and cysteine 217 are joined by a disulfide. Asparagine 221 carries an N-linked (GlcNAc...) asparagine glycan. Residues tyrosine 333 and glutamate 405 each coordinate a beta-D-glucoside. Catalysis depends on glutamate 405, which acts as the Nucleophile. Asparagine 415 and asparagine 436 each carry an N-linked (GlcNAc...) asparagine glycan. Positions 450 and 466 each coordinate a beta-D-glucoside.

It belongs to the glycosyl hydrolase 1 family.

It carries out the reaction Hydrolysis of terminal, non-reducing beta-D-glucosyl residues with release of beta-D-glucose.. The sequence is that of Beta-glucosidase 3 (BGLU3) from Oryza sativa subsp. japonica (Rice).